Here is a 224-residue protein sequence, read N- to C-terminus: Magnesium-protoporphyrin O-methyltransferase (224 aa).

It belongs to the class I-like SAM-binding methyltransferase superfamily. Magnesium protoporphyrin O-methyltransferase family.

The catalysed reaction is Mg-protoporphyrin IX + S-adenosyl-L-methionine = Mg-protoporphyrin IX 13-monomethyl ester + S-adenosyl-L-homocysteine. It functions in the pathway porphyrin-containing compound metabolism; bacteriochlorophyll biosynthesis (light-independent). Functionally, converts Mg-protoporphyrin IX to Mg-protoporphyrin IX methylester using S-adenosyl-L-methionine as a cofactor. The polypeptide is Magnesium-protoporphyrin O-methyltransferase (bchM) (Rhodobacter capsulatus (Rhodopseudomonas capsulata)).